Reading from the N-terminus, the 497-residue chain is Cytochrome P450 monooxygenase opdB (497 aa).

A helical membrane pass occupies residues 26–46 (YLGAMAGSVILLISAFTLSLG). The interval 69 to 90 (MSKFTRSRELSQQGEDAAGTEP) is disordered. Cys-454 contacts heme.

The cofactor is heme.

The protein localises to the membrane. It functions in the pathway secondary metabolite biosynthesis. Its function is as follows. Cytochrome P450 monooxygenase; part of the gene cluster that mediates the biosynthesis of oxopyrrolidines, polyketide-amino acid hybrid compounds with feature structures of tetramic acid. Does not seem to play a role in oxopyrrolidines A and B biosynthesis. May be involved in further modifications of these oxopyrrolidines. The chain is Cytochrome P450 monooxygenase opdB from Penicillium oxalicum (strain 114-2 / CGMCC 5302) (Penicillium decumbens).